A 129-amino-acid chain; its full sequence is Glycine cleavage system H protein (129 aa).

One can recognise a Lipoyl-binding domain in the interval 24–106; it reads AVRIGLSAYA…HGEGWLLVIQ (83 aa). At Lys65 the chain carries N6-lipoyllysine.

The protein belongs to the GcvH family. The glycine cleavage system is composed of four proteins: P, T, L and H. The cofactor is (R)-lipoate.

Functionally, the glycine cleavage system catalyzes the degradation of glycine. The H protein shuttles the methylamine group of glycine from the P protein to the T protein. This chain is Glycine cleavage system H protein, found in Synechococcus sp. (strain WH7803).